A 36-amino-acid chain; its full sequence is Potassium channel toxin alpha-KTx 2.7 (36 aa).

Disulfide bonds link Cys7–Cys29, Cys13–Cys34, and Cys17–Cys36.

This sequence belongs to the short scorpion toxin superfamily. Potassium channel inhibitor family. Alpha-KTx 02 subfamily. Expressed by the venom gland.

It localises to the secreted. Functionally, inhibitor of voltage-gated potassium channels (Kv). This protein is capable of displacing the binding of radio-labeled noxiustoxin (AC P08815) to rat brain synaptosomes with high affinity (about 100 pM). It is also capable of inhibiting transient potassium-currents (resembling I(A)-type currents), in cultured rat cerebellar granule cells. About 50% of the peak currents are reduced by application of a 1.5 uM solution of this toxin. Is lethal to mice (when less than 100 ug are injected). This chain is Potassium channel toxin alpha-KTx 2.7, found in Centruroides limpidus (Mexican scorpion).